Reading from the N-terminus, the 648-residue chain is Threonine--tRNA ligase (648 aa).

Positions methionine 1 to threonine 61 constitute a TGS domain. The segment at aspartate 242 to proline 540 is catalytic. 3 residues coordinate Zn(2+): cysteine 336, histidine 387, and histidine 517.

Belongs to the class-II aminoacyl-tRNA synthetase family. Homodimer. It depends on Zn(2+) as a cofactor.

The protein resides in the cytoplasm. The catalysed reaction is tRNA(Thr) + L-threonine + ATP = L-threonyl-tRNA(Thr) + AMP + diphosphate + H(+). In terms of biological role, catalyzes the attachment of threonine to tRNA(Thr) in a two-step reaction: L-threonine is first activated by ATP to form Thr-AMP and then transferred to the acceptor end of tRNA(Thr). Also edits incorrectly charged L-seryl-tRNA(Thr). The protein is Threonine--tRNA ligase of Streptococcus thermophilus (strain ATCC BAA-250 / LMG 18311).